Here is a 236-residue protein sequence, read N- to C-terminus: Probable pseudouridine-5'-phosphatase YKL033W-A (236 aa).

It belongs to the HAD-like hydrolase superfamily.

The enzyme catalyses XMP + H2O = xanthosine + phosphate. It catalyses the reaction psi-UMP + H2O = pseudouridine + phosphate. Nucleotidase with XMP as the best in vitro substrate. Low catalytic efficiencies of YKL033W-A observed with XMP and other substrates suggest that these could be secondary activities for this protein, and its primary substrate is not yet identified. May possess pseudouridine 5'-phosphatase activity and together with dTTP/UTP pyrophosphatase YOR111W might constitute a pathway for the detoxification of pseudouridine 5'-triphosphate (Psi-UTP) and -monophosphate (Psi-UMP). In Saccharomyces cerevisiae (strain ATCC 204508 / S288c) (Baker's yeast), this protein is Probable pseudouridine-5'-phosphatase YKL033W-A.